The following is a 236-amino-acid chain: Small ribosomal subunit protein uS2c (236 aa).

Belongs to the universal ribosomal protein uS2 family.

Its subcellular location is the plastid. The protein resides in the chloroplast. The sequence is that of Small ribosomal subunit protein uS2c (rps2) from Lemna minor (Common duckweed).